The sequence spans 314 residues: tRNA uridine(34) hydroxylase (314 aa).

Residues 135 to 229 (SDPDTIVIDT…YLEEVPEEES (95 aa)) form the Rhodanese domain. The active-site Cysteine persulfide intermediate is Cys-189.

It belongs to the TrhO family.

The enzyme catalyses uridine(34) in tRNA + AH2 + O2 = 5-hydroxyuridine(34) in tRNA + A + H2O. Its function is as follows. Catalyzes oxygen-dependent 5-hydroxyuridine (ho5U) modification at position 34 in tRNAs. The sequence is that of tRNA uridine(34) hydroxylase from Agrobacterium fabrum (strain C58 / ATCC 33970) (Agrobacterium tumefaciens (strain C58)).